The sequence spans 98 residues: DNA-binding protein HU (98 aa).

This sequence belongs to the bacterial histone-like protein family. Homodimer.

Its function is as follows. Histone-like DNA-binding protein which is capable of wrapping DNA to stabilize it, and thus to prevent its denaturation under extreme environmental conditions. This is DNA-binding protein HU (hup) from Campylobacter jejuni subsp. jejuni serotype O:2 (strain ATCC 700819 / NCTC 11168).